The following is a 750-amino-acid chain: 5-methyltetrahydropteroyltriglutamate--homocysteine methyltransferase (750 aa).

Residues 15–18 and K114 each bind 5-methyltetrahydropteroyltri-L-glutamate; that span reads RELK. L-homocysteine is bound by residues 425–427 and E478; that span reads IGS. L-methionine-binding positions include 425-427 and E478; that span reads IGS. W555 provides a ligand contact to 5-methyltetrahydropteroyltri-L-glutamate. D593 contributes to the L-homocysteine binding site. An L-methionine-binding site is contributed by D593. E599 serves as a coordination point for 5-methyltetrahydropteroyltri-L-glutamate. H636, C638, and E660 together coordinate Zn(2+). The Proton donor role is filled by H689. C721 contacts Zn(2+).

The protein belongs to the vitamin-B12 independent methionine synthase family. The cofactor is Zn(2+).

The enzyme catalyses 5-methyltetrahydropteroyltri-L-glutamate + L-homocysteine = tetrahydropteroyltri-L-glutamate + L-methionine. It participates in amino-acid biosynthesis; L-methionine biosynthesis via de novo pathway; L-methionine from L-homocysteine (MetE route): step 1/1. Functionally, catalyzes the transfer of a methyl group from 5-methyltetrahydrofolate to homocysteine resulting in methionine formation. This is 5-methyltetrahydropteroyltriglutamate--homocysteine methyltransferase from Streptococcus sanguinis (strain SK36).